A 333-amino-acid chain; its full sequence is MLTRRILGALVGATALSLALSVPALAEPIVIKFSHVVAPDTPKGKGAAKFEELAEKYTNGAVDVEVYPNSQLYKDKEELEALQLGAVQMLAPSLAKFGPLGVQDFEVFDLPYIFKDYEALHKVTQGEAGKMLLSKLEAKGITGLAFWDNGFKIMSANTPLTMPDDFLGLKMRIQSSKVLEAEMNALGAVPQVMAFSEVYQALQTGVVDGTENPPSNMFTQKMNEVQKHATVSNHGYLGYAVIVNKQFWDGLPADVRTGLEKAMAESTDYANGIAKEENEKALQAMKDAGTTEFHELTAEERAAWEEVLTPVHDEMAERIGAETIAAVKAATAE.

The N-terminal stretch at 1–26 is a signal peptide; that stretch reads MLTRRILGALVGATALSLALSVPALA.

It belongs to the bacterial solute-binding protein 7 family. The complex comprises the extracytoplasmic solute receptor protein DctP, and the two transmembrane proteins DctQ and DctM.

Its subcellular location is the periplasm. In terms of biological role, part of the tripartite ATP-independent periplasmic (TRAP) transport system DctPQM involved in C4-dicarboxylates uptake. Binds C4-dicarboxylates such as fumarate, succinate, L-malate and D-malate. In Rhodobacter capsulatus (Rhodopseudomonas capsulata), this protein is C4-dicarboxylate-binding periplasmic protein DctP.